The sequence spans 543 residues: MGDWNLLGGILEEVHSHSTIVGKIWLTILFIFRMLVLRVAAEDVWDDEQSAFACNTRQPGCNNICYDDAFPISLIRFWVLQIIFVSSPSLVYMGHALYRLRAFEKDRQRKKSHLRAQMENPDLDLEEQQRIDRELRRLEEQKRIHKVPLKGCLLRTYVLHILTRSVLEVGFMIGQYILYGFQMHPLYKCTQPPCPNAVDCFVSRPTEKTIFMLFMHSIAAISLLLNILEIFHLGIRKIMRTLYKKSSSEGIEDETGPPFHLKKYSVAQQCMICSSLPERISPLQANNQQQVIRVNVPKSKTMWQIPQPRQLEVDPSNGKKDWSEKDQHSGQLHVHSPCPWAGSAGNQHLGQQSDHSSFGLQNTMSQSWLGTTTAPRNCPSFAVGTWEQSQDPEPSGEPLTDLHSHCRDSEGSMRESGVWIDRSRPGSRKASFLSRLLSEKRHLHSDSGSSGSRNSSCLDFPHWENSPSPLPSVTGHRTSMVRQAALPIMELSQELFHSGCFLFPFFLPGVCMYVCVDREADGGGDYLWRDKIIHSIHSVKFNS.

Residues 1-16 are Cytoplasmic-facing; sequence MGDWNLLGGILEEVHS. The helical transmembrane segment at 17–37 threads the bilayer; sequence HSTIVGKIWLTILFIFRMLVL. The Extracellular segment spans residues 38–76; sequence RVAAEDVWDDEQSAFACNTRQPGCNNICYDDAFPISLIR. Residues 77 to 97 form a helical membrane-spanning segment; sequence FWVLQIIFVSSPSLVYMGHAL. Residues 98–165 are Cytoplasmic-facing; it reads YRLRAFEKDR…TYVLHILTRS (68 aa). The chain crosses the membrane as a helical span at residues 166 to 186; that stretch reads VLEVGFMIGQYILYGFQMHPL. The Extracellular segment spans residues 187-209; it reads YKCTQPPCPNAVDCFVSRPTEKT. A helical transmembrane segment spans residues 210–230; it reads IFMLFMHSIAAISLLLNILEI. Residues 231–543 are Cytoplasmic-facing; sequence FHLGIRKIMR…HSIHSVKFNS (313 aa). Disordered regions lie at residues 306–359 and 379–424; these read PQPR…SSFG and PSFA…DRSR. A compositionally biased stretch (basic and acidic residues) spans 317–328; that stretch reads NGKKDWSEKDQH. Positions 344 to 359 are enriched in polar residues; it reads AGNQHLGQQSDHSSFG. Positions 400 to 413 are enriched in basic and acidic residues; sequence TDLHSHCRDSEGSM.

This sequence belongs to the connexin family. Alpha-type (group II) subfamily. A connexon is composed of a hexamer of connexins. As to expression, expressed in skeletal muscle and heart.

The protein localises to the cell membrane. It localises to the cell junction. The protein resides in the gap junction. Functionally, one gap junction consists of a cluster of closely packed pairs of transmembrane channels, the connexons, through which materials of low MW diffuse from one cell to a neighboring cell. Involved in tracer coupling between horizontal cells of the retina. May play a role in the regulation of horizontal cell patterning. This is Gap junction alpha-10 protein (GJA10) from Homo sapiens (Human).